The chain runs to 123 residues: Large ribosomal subunit protein uL14 (123 aa).

It belongs to the universal ribosomal protein uL14 family. As to quaternary structure, part of the 50S ribosomal subunit. Forms a cluster with proteins L3 and L19. In the 70S ribosome, L14 and L19 interact and together make contacts with the 16S rRNA in bridges B5 and B8.

Functionally, binds to 23S rRNA. Forms part of two intersubunit bridges in the 70S ribosome. This chain is Large ribosomal subunit protein uL14, found in Citrobacter koseri (strain ATCC BAA-895 / CDC 4225-83 / SGSC4696).